Consider the following 116-residue polypeptide: Putative pterin-4-alpha-carbinolamine dehydratase (116 aa).

Belongs to the pterin-4-alpha-carbinolamine dehydratase family.

The enzyme catalyses (4aS,6R)-4a-hydroxy-L-erythro-5,6,7,8-tetrahydrobiopterin = (6R)-L-erythro-6,7-dihydrobiopterin + H2O. This Xylella fastidiosa (strain 9a5c) protein is Putative pterin-4-alpha-carbinolamine dehydratase.